The following is a 2136-amino-acid chain: U5 small nuclear ribonucleoprotein 200 kDa helicase (2136 aa).

Phosphoserine is present on residues Ser-17 and Ser-26. Positions Glu-39–Met-81 are disordered. A Glycyl lysine isopeptide (Lys-Gly) (interchain with G-Cter in SUMO2) cross-link involves residue Lys-46. Residues Glu-48–Met-81 are compositionally biased toward basic and acidic residues. Positions Asp-54–Met-84 form a coiled coil. Ser-225 carries the phosphoserine modification. Thr-389 carries the phosphothreonine modification. Residues Asp-395–Ala-2129 form an interaction with C9orf78 and WBP4 region. Residues Arg-490 to Leu-673 enclose the Helicase ATP-binding 1 domain. Ala-503–Thr-510 is a binding site for ATP. The DEAH box motif lies at Asp-615–His-618. A Helicase C-terminal 1 domain is found at Pro-684–Gly-921. Position 709 is a phosphotyrosine (Tyr-709). Lys-944 is covalently cross-linked (Glycyl lysine isopeptide (Lys-Gly) (interchain with G-Cter in SUMO)). Lys-971 carries the post-translational modification N6-acetyllysine; alternate. Residue Lys-971 forms a Glycyl lysine isopeptide (Lys-Gly) (interchain with G-Cter in SUMO); alternate linkage. One can recognise an SEC63 1 domain in the interval Thr-982–Phe-1286. Glycyl lysine isopeptide (Lys-Gly) (interchain with G-Cter in SUMO) cross-links involve residues Lys-1071 and Lys-1199. Residues Leu-1282 to Asp-2136 form an interaction with TSSC4 region. Residues Asn-1337–Phe-1512 form the Helicase ATP-binding 2 domain. Ala-1350–Thr-1357 is an ATP binding site. Thr-1428 carries the post-translational modification Phosphothreonine. The DEAH box motif lies at Asp-1454–His-1457. The Helicase C-terminal 2 domain maps to Pro-1545–Asp-1753. Residue Thr-1765 is modified to Phosphothreonine. The region spanning Pro-1812 to Val-2124 is the SEC63 2 domain. Ser-2002 is modified (phosphoserine). Residue Lys-2091 forms a Glycyl lysine isopeptide (Lys-Gly) (interchain with G-Cter in SUMO) linkage. Residue Thr-2131 is modified to Phosphothreonine. Phosphoserine occurs at positions 2133 and 2135.

The protein belongs to the helicase family. SKI2 subfamily. Component of a core complex containing at least PRPF8, SNRNP200, EFTUD2 and SNRNP40. Component of the U5 snRNP and U4/U6-U5 tri-snRNP complexes, building blocks of the spliceosome. Component of the U4/U6-U5 tri-snRNP complex composed of the U4, U6 and U5 snRNAs and at least PRPF3, PRPF4, PRPF6, PRPF8, PRPF31, SNRNP200, TXNL4A, SNRNP40, DDX23, CD2BP2, PPIH, SNU13, EFTUD2, SART1 and USP39. Component of precatalytic, catalytic and postcatalytic spliceosomal complexes. Component of the minor spliceosome, which splices U12-type introns. Interacts with C9orf78; the interaction is direct and mutually exclusive with its interaction with WBP4. Interacts with WBP4; the interaction is mutually exclusive with its interaction with C9orf78. Interacts with PRPF8. Interacts with TSSC4; the interaction is direct, excludes recruitment of C9ORF78 and WBP4 to SNRNP200 and negatively regulates its RNA helicase activity.

The protein localises to the nucleus. It carries out the reaction ATP + H2O = ADP + phosphate + H(+). Its function is as follows. Catalyzes the ATP-dependent unwinding of U4/U6 RNA duplices, an essential step in the assembly of a catalytically active spliceosome. Plays a role in pre-mRNA splicing as core component of precatalytic, catalytic and postcatalytic spliceosomal complexes. As a component of the minor spliceosome, involved in the splicing of U12-type introns in pre-mRNAs. Involved in spliceosome assembly, activation and disassembly. Mediates changes in the dynamic network of RNA-RNA interactions in the spliceosome. The sequence is that of U5 small nuclear ribonucleoprotein 200 kDa helicase (Snrnp200) from Mus musculus (Mouse).